A 234-amino-acid polypeptide reads, in one-letter code: Ribosomal RNA small subunit methyltransferase G (234 aa).

Residues glycine 96, leucine 101, 119–121 (DAT), 147–148 (VE), and arginine 161 each bind S-adenosyl-L-methionine.

This sequence belongs to the methyltransferase superfamily. RNA methyltransferase RsmG family.

The protein localises to the cytoplasm. Functionally, specifically methylates the N7 position of a guanine in 16S rRNA. This Chlorobium chlorochromatii (strain CaD3) protein is Ribosomal RNA small subunit methyltransferase G.